The sequence spans 238 residues: 2,3,4,5-tetrahydropyridine-2,6-dicarboxylate N-acetyltransferase (238 aa).

This sequence belongs to the transferase hexapeptide repeat family. DapH subfamily.

The enzyme catalyses (S)-2,3,4,5-tetrahydrodipicolinate + acetyl-CoA + H2O = L-2-acetamido-6-oxoheptanedioate + CoA. The protein operates within amino-acid biosynthesis; L-lysine biosynthesis via DAP pathway; LL-2,6-diaminopimelate from (S)-tetrahydrodipicolinate (acetylase route): step 1/3. In terms of biological role, catalyzes the transfer of an acetyl group from acetyl-CoA to tetrahydrodipicolinate. The polypeptide is 2,3,4,5-tetrahydropyridine-2,6-dicarboxylate N-acetyltransferase (Thermotoga neapolitana (strain ATCC 49049 / DSM 4359 / NBRC 107923 / NS-E)).